We begin with the raw amino-acid sequence, 430 residues long: Histidine--tRNA ligase (430 aa).

The protein belongs to the class-II aminoacyl-tRNA synthetase family. In terms of assembly, homodimer.

The protein localises to the cytoplasm. The enzyme catalyses tRNA(His) + L-histidine + ATP = L-histidyl-tRNA(His) + AMP + diphosphate + H(+). The protein is Histidine--tRNA ligase of Parasynechococcus marenigrum (strain WH8102).